Consider the following 327-residue polypeptide: Aliphatic sulfonates import ATP-binding protein SsuB (327 aa).

The disordered stretch occupies residues 21-54 (ELAQPRIADGDAQDAAVYERDGGAHAPPDGDRAD). The segment covering 37–54 (VYERDGGAHAPPDGDRAD) has biased composition (basic and acidic residues). The 220-residue stretch at 66-285 (VRLTRVSKRY…ARASAAFAAL (220 aa)) folds into the ABC transporter domain. ATP is bound at residue 98–105 (GRSGCGKS). Residues 300–327 (APAAPNAAGPEGASRGRAAPASGLRWAV) are disordered.

The protein belongs to the ABC transporter superfamily. Aliphatic sulfonates importer (TC 3.A.1.17.2) family. The complex is composed of two ATP-binding proteins (SsuB), two transmembrane proteins (SsuC) and a solute-binding protein (SsuA).

The protein resides in the cell inner membrane. The enzyme catalyses ATP + H2O + aliphatic sulfonate-[sulfonate-binding protein]Side 1 = ADP + phosphate + aliphatic sulfonateSide 2 + [sulfonate-binding protein]Side 1.. Part of the ABC transporter complex SsuABC involved in aliphatic sulfonates import. Responsible for energy coupling to the transport system. In Burkholderia pseudomallei (strain K96243), this protein is Aliphatic sulfonates import ATP-binding protein SsuB.